The sequence spans 393 residues: Phosphoglycerate kinase (393 aa).

Residues 22–24, Arg37, 60–63, Arg119, and Arg152 contribute to the substrate site; these read DFN and HLGR. Residues Lys202, Gly293, Glu324, and 350-353 each bind ATP; that span reads GGDS.

This sequence belongs to the phosphoglycerate kinase family. As to quaternary structure, monomer.

The protein resides in the cytoplasm. It catalyses the reaction (2R)-3-phosphoglycerate + ATP = (2R)-3-phospho-glyceroyl phosphate + ADP. The protein operates within carbohydrate degradation; glycolysis; pyruvate from D-glyceraldehyde 3-phosphate: step 2/5. In Borreliella burgdorferi (strain ZS7) (Borrelia burgdorferi), this protein is Phosphoglycerate kinase.